The primary structure comprises 250 residues: Coproheme decarboxylase (250 aa).

Residues Arg131, 145–149 (YPMNK), His172, and Gln185 each bind Fe-coproporphyrin III. Residue Tyr145 is part of the active site.

It belongs to the ChdC family. Type 1 subfamily. Requires Fe-coproporphyrin III as cofactor.

The enzyme catalyses Fe-coproporphyrin III + 2 H2O2 + 2 H(+) = heme b + 2 CO2 + 4 H2O. The catalysed reaction is Fe-coproporphyrin III + H2O2 + H(+) = harderoheme III + CO2 + 2 H2O. It catalyses the reaction harderoheme III + H2O2 + H(+) = heme b + CO2 + 2 H2O. It functions in the pathway porphyrin-containing compound metabolism; protoheme biosynthesis. Its function is as follows. Involved in coproporphyrin-dependent heme b biosynthesis. Catalyzes the decarboxylation of Fe-coproporphyrin III (coproheme) to heme b (protoheme IX), the last step of the pathway. The reaction occurs in a stepwise manner with a three-propionate intermediate. The chain is Coproheme decarboxylase from Staphylococcus aureus (strain MSSA476).